The following is a 788-amino-acid chain: Ribonucleoside-diphosphate reductase subunit alpha (788 aa).

Residues 2-92 (ITVVKRNGRI…LYDLYHKVSG (91 aa)) enclose the ATP-cone domain. ATP is bound by residues Lys-6, 12–18 (EPLDITK), and Thr-52. GDP is bound at residue Thr-200. Residues Cys-216 and Cys-497 are joined by a disulfide bond. DTTP is bound by residues 223–225 (DNI) and Arg-253. Asn-424 provides a ligand contact to GDP. Asn-424 serves as the catalytic Proton acceptor. Residue Cys-426 is the Cysteine radical intermediate of the active site. GDP-binding positions include Glu-428 and 661-663 (SSI). The active-site Proton acceptor is Glu-428.

This sequence belongs to the ribonucleoside diphosphate reductase large chain family. In terms of assembly, tetramer of two alpha and two beta subunits.

It carries out the reaction a 2'-deoxyribonucleoside 5'-diphosphate + [thioredoxin]-disulfide + H2O = a ribonucleoside 5'-diphosphate + [thioredoxin]-dithiol. Its activity is regulated as follows. Under complex allosteric control mediated by deoxynucleoside triphosphates and ATP binding to separate specificity and activation sites on the alpha subunit. The type of nucleotide bound at the specificity site determines substrate preference. It seems probable that ATP makes the enzyme reduce CDP and UDP, dGTP favors ADP reduction and dTTP favors GDP reduction. Stimulated by ATP and inhibited by dATP binding to the activity site. Its function is as follows. Provides the precursors necessary for DNA synthesis. Catalyzes the biosynthesis of deoxyribonucleotides from the corresponding ribonucleotides. This Helicobacter pylori (strain ATCC 700392 / 26695) (Campylobacter pylori) protein is Ribonucleoside-diphosphate reductase subunit alpha (nrdA).